We begin with the raw amino-acid sequence, 327 residues long: Zinc transport protein ZntB (327 aa).

The Cytoplasmic portion of the chain corresponds to 1-273 (MEAIKGSDVN…ARRTYTMSLM (273 aa)). Residues 274 to 294 (AMVFLPSTFLTGLFGVNLGGI) form a helical membrane-spanning segment. The Periplasmic segment spans residues 295-300 (PGGGWR). Residues 301-321 (FGFSLFCILLVVLIGGVTLWL) form a helical membrane-spanning segment. The Cytoplasmic portion of the chain corresponds to 322–327 (HRSKWL).

The protein belongs to the CorA metal ion transporter (MIT) (TC 1.A.35) family.

The protein localises to the cell inner membrane. The catalysed reaction is Zn(2+)(out) + H(+)(out) = Zn(2+)(in) + H(+)(in). Zinc transporter. Acts as a Zn(2+):proton symporter, which likely mediates zinc ion uptake. This is Zinc transport protein ZntB from Salmonella enteritidis PT4 (strain P125109).